The following is a 325-amino-acid chain: Casein kinase I isoform alpha (325 aa).

N-acetylalanine is present on Ala-2. Ser-4 is subject to Phosphoserine. Lys-8 carries the post-translational modification N6-acetyllysine. Positions 17 to 285 (YKLVRKIGSG…YLRQLFRILF (269 aa)) constitute a Protein kinase domain. ATP contacts are provided by residues 23–31 (IGSGSFGDI) and Lys-46. Asp-136 (proton acceptor) is an active-site residue. Ile-156 carries the post-translational modification Phosphoserine.

It belongs to the protein kinase superfamily. CK1 Ser/Thr protein kinase family. Casein kinase I subfamily. In terms of assembly, interacts with the Axin complex. Interacts with TUT1, leading to TUT1 phosphorylation. Interacts with FAM83A, FAM83B, FAM83C, FAM83D, FAM83E, FAM83F, FAM83G and FAM83H (via DUF1669). Interaction with FAM83H recruits CSNK1A1 to keratin filaments. Phosphorylated by MTOR in response to mitogenic stimulation, leading to its activation.

Its subcellular location is the cytoplasm. The protein resides in the cytoskeleton. It is found in the microtubule organizing center. It localises to the centrosome. The protein localises to the chromosome. Its subcellular location is the centromere. The protein resides in the kinetochore. It is found in the nucleus speckle. It localises to the cilium basal body. The protein localises to the spindle. It carries out the reaction L-seryl-[protein] + ATP = O-phospho-L-seryl-[protein] + ADP + H(+). It catalyses the reaction L-threonyl-[protein] + ATP = O-phospho-L-threonyl-[protein] + ADP + H(+). Its function is as follows. Casein kinases are operationally defined by their preferential utilization of acidic proteins such as caseins as substrates. Can phosphorylate a large number of proteins. Participates in Wnt signaling. Phosphorylates CTNNB1 at 'Ser-45'. May phosphorylate PER1 and PER2. May play a role in segregating chromosomes during mitosis. May play a role in keratin cytoskeleton disassembly and thereby, it may regulate epithelial cell migration. Acts as a positive regulator of mTORC1 and mTORC2 signaling in response to nutrients by mediating phosphorylation of DEPTOR inhibitor. Acts as an inhibitor of NLRP3 inflammasome assembly by mediating phosphorylation of NLRP3. The polypeptide is Casein kinase I isoform alpha (Csnk1a1) (Rattus norvegicus (Rat)).